The following is a 74-amino-acid chain: Large ribosomal subunit protein uL30 (74 aa).

It belongs to the universal ribosomal protein uL30 family. As to quaternary structure, part of the 50S ribosomal subunit.

The protein is Large ribosomal subunit protein uL30 of Micrococcus luteus (strain ATCC 4698 / DSM 20030 / JCM 1464 / CCM 169 / CCUG 5858 / IAM 1056 / NBRC 3333 / NCIMB 9278 / NCTC 2665 / VKM Ac-2230) (Micrococcus lysodeikticus).